Consider the following 29-residue polypeptide: Cytochrome b6-f complex subunit 8 (29 aa).

The helical transmembrane segment at 3 to 23 threads the bilayer; sequence IVSIGWAALMVVFTFSLSLVV.

Belongs to the PetN family. The 4 large subunits of the cytochrome b6-f complex are cytochrome b6, subunit IV (17 kDa polypeptide, PetD), cytochrome f and the Rieske protein, while the 4 small subunits are PetG, PetL, PetM and PetN. The complex functions as a dimer.

Its subcellular location is the plastid. It localises to the chloroplast thylakoid membrane. Component of the cytochrome b6-f complex, which mediates electron transfer between photosystem II (PSII) and photosystem I (PSI), cyclic electron flow around PSI, and state transitions. The chain is Cytochrome b6-f complex subunit 8 from Zygnema circumcarinatum (Green alga).